A 663-amino-acid chain; its full sequence is Glucans biosynthesis glucosyltransferase H (663 aa).

6 helical membrane passes run 64–86 (WMLGLMTIAMGVAGWKASFDTIA), 101–123 (LAPLFLALSLWFCTALIGFVVLM), 413–435 (LVIGVLSYALSPLWFFCLSAGLI), 470–492 (AWAMIITFVLLFGPKILGAILVL), 558–580 (EAWAAMGWISLSGLILAASFWFT), and 584–606 (LTATAPILAGLVLAVPLTMLGAH).

The protein belongs to the glycosyltransferase 2 family. OpgH subfamily.

The protein resides in the cell inner membrane. The protein operates within glycan metabolism; osmoregulated periplasmic glucan (OPG) biosynthesis. In terms of biological role, involved in the biosynthesis of osmoregulated periplasmic glucans (OPGs). The sequence is that of Glucans biosynthesis glucosyltransferase H from Caulobacter vibrioides (strain ATCC 19089 / CIP 103742 / CB 15) (Caulobacter crescentus).